A 79-amino-acid polypeptide reads, in one-letter code: Sec-independent protein translocase protein TatA (79 aa).

A helical transmembrane segment spans residues 1–21 (MGGWSSPSHWLIILLIVVLLF). The segment covering 49-61 (EVAKNTQKIEENK) has biased composition (basic and acidic residues). The tract at residues 49–79 (EVAKNTQKIEENKNTTNNTNADASIDETKKA) is disordered.

It belongs to the TatA/E family. In terms of assembly, the Tat system comprises two distinct complexes: a TatABC complex, containing multiple copies of TatA, TatB and TatC subunits, and a separate TatA complex, containing only TatA subunits. Substrates initially bind to the TatABC complex, which probably triggers association of the separate TatA complex to form the active translocon.

The protein resides in the cell inner membrane. In terms of biological role, part of the twin-arginine translocation (Tat) system that transports large folded proteins containing a characteristic twin-arginine motif in their signal peptide across membranes. TatA could form the protein-conducting channel of the Tat system. The protein is Sec-independent protein translocase protein TatA of Campylobacter jejuni subsp. doylei (strain ATCC BAA-1458 / RM4099 / 269.97).